We begin with the raw amino-acid sequence, 517 residues long: Crotonobetaine/carnitine--CoA ligase (517 aa).

It belongs to the ATP-dependent AMP-binding enzyme family.

It catalyses the reaction 4-(trimethylamino)butanoate + ATP + CoA = 4-(trimethylamino)butanoyl-CoA + AMP + diphosphate. The catalysed reaction is crotonobetaine + ATP + CoA = crotonobetainyl-CoA + AMP + diphosphate. The enzyme catalyses (R)-carnitine + ATP + CoA = (R)-carnitinyl-CoA + AMP + diphosphate. The protein operates within amine and polyamine metabolism; carnitine metabolism. Functionally, catalyzes the transfer of CoA to carnitine, generating the initial carnitinyl-CoA needed for the CaiB reaction cycle. Also has activity toward crotonobetaine and gamma-butyrobetaine. This Escherichia coli O8 (strain IAI1) protein is Crotonobetaine/carnitine--CoA ligase.